A 546-amino-acid chain; its full sequence is NRAMP-like transporter smf-2 (546 aa).

Residues 1 to 42 (MPGFQNANISDLAPPAREKTFDDTIAVKIPEDEKNTWFSWRK) lie on the Cytoplasmic side of the membrane. A helical membrane pass occupies residues 43–63 (LWAFTGPGFLMSIAYLDPGNI). Residues 64 to 70 (ESDLQAG) are Extracellular-facing. The chain crosses the membrane as a helical span at residues 71 to 91 (AQAEYKLLWVLLVSHIVGMLL). At 92–119 (QRMSARLGVVSGKHMAEIAYDYYPLVPR) the chain is on the cytoplasmic side. Residues 120-140 (IILWLMIEIAIVCSDMQEVIG) traverse the membrane as a helical segment. Topologically, residues 141–152 (TAIAIYLLSSGK) are extracellular. The helical transmembrane segment at 153–173 (IPLLVGVLITILDTFTFLFID) threads the bilayer. Residues 174-181 (RYGIRKLE) lie on the Cytoplasmic side of the membrane. A helical transmembrane segment spans residues 182–202 (FIFVALISTMAISFGYEFVVM). Over 203 to 228 (KPVLTKVLTGTVVPWCSGCGKEEIIT) the chain is Extracellular. Residues 229–249 (AISIFGAVIMPHNFYLHSALV) traverse the membrane as a helical segment. Topologically, residues 250 to 270 (KSRKVDRSSKTRIAEANKYFS) are cytoplasmic. A helical membrane pass occupies residues 271–291 (IESAFALSVSFFINLFVLSVF). Over 292–334 (ARGLYQKTNGDVNSMCLSHNDIPDSNVFPNNTSSVTVDLFQGG) the chain is Extracellular. N-linked (GlcNAc...) asparagine glycosylation is present at asparagine 321. The helical transmembrane segment at 335–355 (IYLGCQFGLFAMIIWAIGIFA) threads the bilayer. Topologically, residues 356-386 (AGQSSTMTGTYTGQFVMEGFVRISWPKWKRV) are cytoplasmic. Residues 387–407 (LITRAVAITPTLILCIKAHGI) form a helical membrane-spanning segment. At 408-415 (KNLTGMND) the chain is on the extracellular side. N-linked (GlcNAc...) asparagine glycosylation occurs at asparagine 409. A helical membrane pass occupies residues 416 to 436 (FLNCVQMVQLPFALIPMITFT). Over 437-453 (SSKRIMHNFRTSKPLQY) the chain is Cytoplasmic. A helical membrane pass occupies residues 454 to 474 (FSIICGIITIGINVYFIFQYV). The Extracellular portion of the chain corresponds to 475–483 (TENFGTGWL). Residues 484 to 504 (IFVIIGPFTLLYIAFILYLAI) form a helical membrane-spanning segment. Topologically, residues 505 to 546 (YCLVACELMNDTVNLPGFDFHRTLELDAPWITETFVVNDVYF) are cytoplasmic.

This sequence belongs to the NRAMP family. Expressed in dopaminergic neurons (at protein level). Primarily expressed in mc1, mc2 and mc3 epithelial cells of the pharynx and vpil-6 pharyngeal-intestinal valve cells displaying an anterior-posterior expression gradient. Expressed in gonad sheath cells.

Its subcellular location is the apical cell membrane. The protein resides in the cytoplasmic vesicle membrane. In terms of biological role, probable divalent metal ion transporter which regulates Mn(2+) uptake. The sequence is that of NRAMP-like transporter smf-2 from Caenorhabditis elegans.